The chain runs to 812 residues: G patch domain-containing protein 1 homolog (812 aa).

Residues 1 to 42 (MNRKKLAAYGQEFEDDDEEGSSVSKKPTQIHEEIATDEKGKR) form a disordered region. Residues 29–40 (QIHEEIATDEKG) are compositionally biased toward basic and acidic residues. Positions 145–191 (SNSIGVRMLRSMGWREGRGIGLANVKQKQKRGGESSEAQFDREQASK) constitute a G-patch domain. Disordered stretches follow at residues 384–416 (ANEV…FPDE) and 584–812 (NEIE…EEKK). Over residues 586–609 (IEMRERLLKSRAQRGAEEKKRNQS) the composition is skewed to basic and acidic residues. Composition is skewed to acidic residues over residues 610-630 (DDDD…ENEA) and 653-668 (DGAD…EEAE). A compositionally biased stretch (basic and acidic residues) spans 669-720 (EKERQEILKKREEDLKRRREIVEKKEEENRKRVEKELKELENRDLLRVSKQQ). Positions 761–794 (MKKKKKDKKEKEKKKKSKKSKKSKKEKKTKRKHS) are enriched in basic residues. The segment covering 800–812 (DSGDNSDGWEEKK) has biased composition (acidic residues).

This sequence belongs to the GPATCH1 family.

The chain is G patch domain-containing protein 1 homolog from Caenorhabditis elegans.